Consider the following 732-residue polypeptide: Phosphoribosylformylglycinamidine synthase subunit PurL (732 aa).

The active site involves His-42. Residues Tyr-45 and Lys-84 each coordinate ATP. Glu-86 provides a ligand contact to Mg(2+). Residues 87–90 (SHNH) and Arg-109 each bind substrate. The active-site Proton acceptor is His-88. Position 110 (Asp-110) interacts with Mg(2+). Residue Gln-238 participates in substrate binding. Asp-266 provides a ligand contact to Mg(2+). 310 to 312 (ESQ) lines the substrate pocket. ATP contacts are provided by Asp-496 and Gly-533. Residue Asn-534 coordinates Mg(2+). Ser-536 contacts substrate.

The protein belongs to the FGAMS family. In terms of assembly, monomer. Part of the FGAM synthase complex composed of 1 PurL, 1 PurQ and 2 PurS subunits.

The protein localises to the cytoplasm. It carries out the reaction N(2)-formyl-N(1)-(5-phospho-beta-D-ribosyl)glycinamide + L-glutamine + ATP + H2O = 2-formamido-N(1)-(5-O-phospho-beta-D-ribosyl)acetamidine + L-glutamate + ADP + phosphate + H(+). The protein operates within purine metabolism; IMP biosynthesis via de novo pathway; 5-amino-1-(5-phospho-D-ribosyl)imidazole from N(2)-formyl-N(1)-(5-phospho-D-ribosyl)glycinamide: step 1/2. Part of the phosphoribosylformylglycinamidine synthase complex involved in the purines biosynthetic pathway. Catalyzes the ATP-dependent conversion of formylglycinamide ribonucleotide (FGAR) and glutamine to yield formylglycinamidine ribonucleotide (FGAM) and glutamate. The FGAM synthase complex is composed of three subunits. PurQ produces an ammonia molecule by converting glutamine to glutamate. PurL transfers the ammonia molecule to FGAR to form FGAM in an ATP-dependent manner. PurS interacts with PurQ and PurL and is thought to assist in the transfer of the ammonia molecule from PurQ to PurL. The polypeptide is Phosphoribosylformylglycinamidine synthase subunit PurL (Campylobacter hominis (strain ATCC BAA-381 / DSM 21671 / CCUG 45161 / LMG 19568 / NCTC 13146 / CH001A)).